A 442-amino-acid chain; its full sequence is MRVLSFLCLLLVSYASAKQQFSELQYRNAFTNWMQAHQRTYSSEEFNARYQIFKSNMDYVHQWNSKGGETVLGLNVFADITNQEYRTTYLGTPFDGSALIGTEEEKIFSTPAPTVDWRAQGAVTPIKNQGQCGGCWSFSTTGSTEGAHFIASGTKKDLVSLSEQNLIDCSKSYGNNGCEGGLMTLAFEYIINNKGIDTESSYPYTAEDGKECKFKTSNIGAQIVSYQNVTSGSEASLQSASNNAPVSVAIDASNESFQLYESGIYYEPACSPTQLDHGVLVVGYGSGSSSSSGSSSGKSSSSSSTGGKTSSSSSSGKASSSSSGKASSSSSSGKTSSAASSTSGSQSGSQSGSQSGQSTGSQSGQTSASGQASASGSGSGSGSGSGSGSGSGAVEASSGNYWIVKNSWGTSWGMDGYIFMSKDRNNNCGIATMASFPTASSN.

The N-terminal stretch at 1-17 is a signal peptide; the sequence is MRVLSFLCLLLVSYASA. Residues 18–111 constitute a propeptide, activation peptide; the sequence is KQQFSELQYR…TEEEKIFSTP (94 aa). Intrachain disulfides connect Cys-132–Cys-178 and Cys-169–Cys-212. Cys-135 is an active-site residue. Residues Asn-228 and Asn-254 are each glycosylated (N-linked (GlcNAc...) asparagine). Cys-270 and Cys-428 are joined by a disulfide. The active site involves His-277. The disordered stretch occupies residues 286–396; sequence SGSSSSSGSS…SGSGSGAVEA (111 aa). Residues 287–376 show a composition bias toward low complexity; it reads GSSSSSGSSS…SASGQASASG (90 aa). The span at 377–391 shows a compositional bias: gly residues; it reads SGSGSGSGSGSGSGS. The active site involves Asn-406.

The protein belongs to the peptidase C1 family. Post-translationally, glycosylated; contains GlcNAc-alpha-1-P-Ser residues and fucose.

It is found in the lysosome. The sequence is that of Cysteine proteinase 4 (cprD) from Dictyostelium discoideum (Social amoeba).